A 562-amino-acid polypeptide reads, in one-letter code: Arf-GAP domain and FG repeat-containing protein 1 (562 aa).

An Arf-GAP domain is found at 11 to 135 (EKHLKMLRDM…WYVPPEQAKV (125 aa)). The C4-type zinc-finger motif lies at 29-52 (CFDCDQRGPTYVNMTVGSFVCTSC). The tract at residues 145-193 (GSSASSTSSTPEVKPLKSLLGDSAPTLHLNKGTPSQSPVVGRSQGQQQE) is disordered. S167 is modified (phosphoserine). Polar residues predominate over residues 176-191 (GTPSQSPVVGRSQGQQ). Position 177 is a phosphothreonine (T177). 2 positions are modified to phosphoserine: S181 and S362. S367 is a glycosylation site (O-linked (GlcNAc) serine).

In terms of assembly, interacts with EPS15R and EPS15. Interacts with FCHO1. O-glycosylated. Ubiquitously expressed.

Its subcellular location is the nucleus. The protein localises to the cytoplasmic vesicle. Functionally, required for vesicle docking or fusion during acrosome biogenesis. May play a role in RNA trafficking or localization. In case of infection by HIV-1, acts as a cofactor for viral Rev and promotes movement of Rev-responsive element-containing RNAs from the nuclear periphery to the cytoplasm. This step is essential for HIV-1 replication. This chain is Arf-GAP domain and FG repeat-containing protein 1 (AGFG1), found in Homo sapiens (Human).